A 256-amino-acid chain; its full sequence is Thiazole synthase (256 aa).

The Schiff-base intermediate with DXP role is filled by lysine 95. Residues glycine 156, 182–183 (AG), and 204–205 (NT) contribute to the 1-deoxy-D-xylulose 5-phosphate site.

This sequence belongs to the ThiG family. As to quaternary structure, homotetramer. Forms heterodimers with either ThiH or ThiS.

It localises to the cytoplasm. It carries out the reaction [ThiS sulfur-carrier protein]-C-terminal-Gly-aminoethanethioate + 2-iminoacetate + 1-deoxy-D-xylulose 5-phosphate = [ThiS sulfur-carrier protein]-C-terminal Gly-Gly + 2-[(2R,5Z)-2-carboxy-4-methylthiazol-5(2H)-ylidene]ethyl phosphate + 2 H2O + H(+). Its pathway is cofactor biosynthesis; thiamine diphosphate biosynthesis. Catalyzes the rearrangement of 1-deoxy-D-xylulose 5-phosphate (DXP) to produce the thiazole phosphate moiety of thiamine. Sulfur is provided by the thiocarboxylate moiety of the carrier protein ThiS. In vitro, sulfur can be provided by H(2)S. This chain is Thiazole synthase, found in Salmonella agona (strain SL483).